The chain runs to 200 residues: uncharacterized protein (200 aa).

The first 24 residues, 1–24 (MSRVFSCVLRACVCAGLCCWVCMG), serve as a signal peptide directing secretion. Residues 124-200 (GGRDLPMHGA…GEGGDNGEGE (77 aa)) form a disordered region. The span at 184–200 (LGDEGETGEGGDNGEGE) shows a compositional bias: acidic residues.

This is an uncharacterized protein from Homo sapiens (Human).